Here is a 196-residue protein sequence, read N- to C-terminus: Imidazole glycerol phosphate synthase subunit HisH (196 aa).

The 195-residue stretch at 2–196 (KVAVIKYNAG…ERIIKNFLEL (195 aa)) folds into the Glutamine amidotransferase type-1 domain. Cys-77 acts as the Nucleophile in catalysis. Active-site residues include His-178 and Glu-180.

Heterodimer of HisH and HisF.

It is found in the cytoplasm. It catalyses the reaction 5-[(5-phospho-1-deoxy-D-ribulos-1-ylimino)methylamino]-1-(5-phospho-beta-D-ribosyl)imidazole-4-carboxamide + L-glutamine = D-erythro-1-(imidazol-4-yl)glycerol 3-phosphate + 5-amino-1-(5-phospho-beta-D-ribosyl)imidazole-4-carboxamide + L-glutamate + H(+). The enzyme catalyses L-glutamine + H2O = L-glutamate + NH4(+). Its pathway is amino-acid biosynthesis; L-histidine biosynthesis; L-histidine from 5-phospho-alpha-D-ribose 1-diphosphate: step 5/9. Its function is as follows. IGPS catalyzes the conversion of PRFAR and glutamine to IGP, AICAR and glutamate. The HisH subunit catalyzes the hydrolysis of glutamine to glutamate and ammonia as part of the synthesis of IGP and AICAR. The resulting ammonia molecule is channeled to the active site of HisF. This Bacteroides fragilis (strain ATCC 25285 / DSM 2151 / CCUG 4856 / JCM 11019 / LMG 10263 / NCTC 9343 / Onslow / VPI 2553 / EN-2) protein is Imidazole glycerol phosphate synthase subunit HisH.